Here is a 119-residue protein sequence, read N- to C-terminus: Large ribosomal subunit protein bL20 (119 aa).

It belongs to the bacterial ribosomal protein bL20 family.

Its function is as follows. Binds directly to 23S ribosomal RNA and is necessary for the in vitro assembly process of the 50S ribosomal subunit. It is not involved in the protein synthesizing functions of that subunit. This chain is Large ribosomal subunit protein bL20, found in Clostridium acetobutylicum (strain ATCC 824 / DSM 792 / JCM 1419 / IAM 19013 / LMG 5710 / NBRC 13948 / NRRL B-527 / VKM B-1787 / 2291 / W).